We begin with the raw amino-acid sequence, 296 residues long: ATP synthase gamma chain (296 aa).

Residues 194–216 (IPASAGQAANDNAGSDQPAGDYE) are disordered.

This sequence belongs to the ATPase gamma chain family. In terms of assembly, F-type ATPases have 2 components, CF(1) - the catalytic core - and CF(0) - the membrane proton channel. CF(1) has five subunits: alpha(3), beta(3), gamma(1), delta(1), epsilon(1). CF(0) has three main subunits: a, b and c.

The protein localises to the cell inner membrane. Its function is as follows. Produces ATP from ADP in the presence of a proton gradient across the membrane. The gamma chain is believed to be important in regulating ATPase activity and the flow of protons through the CF(0) complex. In Acidiphilium cryptum (strain JF-5), this protein is ATP synthase gamma chain.